A 148-amino-acid chain; its full sequence is Copper transport protein ctr6 (148 aa).

The Extracellular segment spans residues 1–33; it reads MNHGGNSTMRHCSMKMTFNTDYDNLCIVFKSWH. Residues 34–54 traverse the membrane as a helical segment; that stretch reads IGNLSQFLLSLLAIAILGYLF. Over 55–108 the chain is Cytoplasmic; it reads ERLRSFTSLKETEFQRGYAGQQSEGLLTHHSKSLKSGRPFRLCALYAVQLVFSY. The chain crosses the membrane as a helical span at residues 109–129; it reads FLMLVAMTYNAYVILAIAIGA. Over 130-148 the chain is Extracellular; it reads AFGYRRSHCDTVQTVGLCH.

The protein belongs to the copper transporter (Ctr) (TC 1.A.56) family. SLC31A subfamily. As to quaternary structure, homotrimer.

It localises to the vacuole membrane. In terms of biological role, mobilizes stored copper from the vacuole to the cytoplasm under conditions of copper limitation. The sequence is that of Copper transport protein ctr6 (ctr6) from Schizosaccharomyces pombe (strain 972 / ATCC 24843) (Fission yeast).